Consider the following 649-residue polypeptide: DNA mismatch repair protein MutL (649 aa).

The protein belongs to the DNA mismatch repair MutL/HexB family.

Functionally, this protein is involved in the repair of mismatches in DNA. It is required for dam-dependent methyl-directed DNA mismatch repair. May act as a 'molecular matchmaker', a protein that promotes the formation of a stable complex between two or more DNA-binding proteins in an ATP-dependent manner without itself being part of a final effector complex. This Streptococcus pneumoniae (strain P1031) protein is DNA mismatch repair protein MutL.